Here is an 85-residue protein sequence, read N- to C-terminus: Homeobox protein knotted-1-like 7 (85 aa).

The region spanning 1 to 21 is the ELK domain; it reads ELKNELKQGYKEKLVDIREEI. The homeobox; TALE-type DNA-binding region spans 22-85; it reads MRKRRAGKLP…NQRKRNWHSN (64 aa).

The protein belongs to the TALE/KNOX homeobox family. In terms of tissue distribution, expressed in all tissues examined. Highest expression in leaves.

The protein resides in the nucleus. This chain is Homeobox protein knotted-1-like 7 (KNOX7), found in Zea mays (Maize).